Consider the following 254-residue polypeptide: Alcohol dehydrogenase 2 (254 aa).

Position 10–33 (10–33 (FVAGLGGIGLDTSREIVKSGPKNL)) interacts with NAD(+). S138 contacts substrate. The active-site Proton acceptor is the Y151.

The protein belongs to the short-chain dehydrogenases/reductases (SDR) family. Homodimer.

It carries out the reaction a primary alcohol + NAD(+) = an aldehyde + NADH + H(+). It catalyses the reaction a secondary alcohol + NAD(+) = a ketone + NADH + H(+). The chain is Alcohol dehydrogenase 2 (Adh2) from Drosophila montana (Fruit fly).